The chain runs to 384 residues: MIWQEKIDAALDARRVADALRRRYPVAQGAGRWLVADDCQYLNFSSNDYLGLSHHPQIIRAWQQGADQFGVGSGGSGHVSGYSVAHQVLEEELAEWLGYSRALLFISGFAANQAVIAAMMAKEDRIVADRLSHASLLEAASLSPSPLRRFAHNDVTHLARLLASPCPGQQLVVTEGVFSMDGDSAPLEEIQQVTQQHDGWLMVDDAHGTGVIGEQGRGSCWLQKVKPELLVVTFGKGFGVSGAAVLCSNTVADYLLQFARHLIYSTSMPPAQAQALRASLAVIRSDEGDARREKLAALITRFRAGVQDLPFTLAGSCSAIQPLIVGDNSRALQLAEKLRQQGCWVTAIRPPTVPAGTARLRLTLTAAHEMQDIDRLLEVLHGNG.

A substrate-binding site is contributed by Arg-21. Residue Gly-108 to Phe-109 participates in pyridoxal 5'-phosphate binding. His-133 serves as a coordination point for substrate. 3 residues coordinate pyridoxal 5'-phosphate: Ser-179, His-207, and Thr-233. At Lys-236 the chain carries N6-(pyridoxal phosphate)lysine. Thr-352 serves as a coordination point for substrate.

This sequence belongs to the class-II pyridoxal-phosphate-dependent aminotransferase family. BioF subfamily. As to quaternary structure, homodimer. Pyridoxal 5'-phosphate serves as cofactor.

It catalyses the reaction 6-carboxyhexanoyl-[ACP] + L-alanine + H(+) = (8S)-8-amino-7-oxononanoate + holo-[ACP] + CO2. Its pathway is cofactor biosynthesis; biotin biosynthesis. In terms of biological role, catalyzes the decarboxylative condensation of pimeloyl-[acyl-carrier protein] and L-alanine to produce 8-amino-7-oxononanoate (AON), [acyl-carrier protein], and carbon dioxide. The chain is 8-amino-7-oxononanoate synthase from Escherichia coli (strain UTI89 / UPEC).